We begin with the raw amino-acid sequence, 124 residues long: Large ribosomal subunit protein bL12 (124 aa).

This sequence belongs to the bacterial ribosomal protein bL12 family. In terms of assembly, homodimer. Part of the ribosomal stalk of the 50S ribosomal subunit. Forms a multimeric L10(L12)X complex, where L10 forms an elongated spine to which 2 to 4 L12 dimers bind in a sequential fashion. Binds GTP-bound translation factors.

Functionally, forms part of the ribosomal stalk which helps the ribosome interact with GTP-bound translation factors. Is thus essential for accurate translation. The chain is Large ribosomal subunit protein bL12 from Sulfurovum sp. (strain NBC37-1).